The primary structure comprises 546 residues: Amidase FG08078 (546 aa).

Catalysis depends on charge relay system residues Lys-129 and Ser-204. The active-site Acyl-ester intermediate is Ser-228.

It belongs to the amidase family.

It functions in the pathway mycotoxin biosynthesis. Its function is as follows. Amidase; part of the gene cluster that mediates the biosynthesis of butenolide, a mycotoxin that shows antibiotic activity but does not seem to play a major role in the spread of head blight in wheat. Butenolide is derived from glutamic acid via a 4-acetamido-2-butenoic acid intermediate. The predicted function of the NADH:flavin oxidoreductase FG08077, the cytochrome P450 monooxygenase FG08079, the decarboxylase FG08083, and the putative acetyltransferase FG08082 are consistent with this pathway, however, the respective activities of the butelonide biosynthesis cluster enzymes have still to be experimentally determined. The chain is Amidase FG08078 from Gibberella zeae (strain ATCC MYA-4620 / CBS 123657 / FGSC 9075 / NRRL 31084 / PH-1) (Wheat head blight fungus).